Consider the following 100-residue polypeptide: MHLSPQEKDKLLIVTAALLAERRLNRGLKLNHPEAVAWLSFLVLEGARDGKSVAELMQEGTTWLSRNQVMDGIPELVQEVQIEAVFPDGTKLVTLHDPIR.

It belongs to the urease gamma subunit family. As to quaternary structure, heterotrimer of UreA (gamma), UreB (beta) and UreC (alpha) subunits. Three heterotrimers associate to form the active enzyme.

It localises to the cytoplasm. The catalysed reaction is urea + 2 H2O + H(+) = hydrogencarbonate + 2 NH4(+). It functions in the pathway nitrogen metabolism; urea degradation; CO(2) and NH(3) from urea (urease route): step 1/1. This Synechococcus sp. (strain WH7805) protein is Urease subunit gamma.